We begin with the raw amino-acid sequence, 598 residues long: Elongation factor 4 (598 aa).

The region spanning 2-184 is the tr-type G domain; the sequence is QHIRNFSIIA…TVVRRVPPPK (183 aa). Residues 14-19 and 131-134 contribute to the GTP site; these read DHGKST and NKID.

It belongs to the TRAFAC class translation factor GTPase superfamily. Classic translation factor GTPase family. LepA subfamily.

The protein resides in the cell inner membrane. The enzyme catalyses GTP + H2O = GDP + phosphate + H(+). In terms of biological role, required for accurate and efficient protein synthesis under certain stress conditions. May act as a fidelity factor of the translation reaction, by catalyzing a one-codon backward translocation of tRNAs on improperly translocated ribosomes. Back-translocation proceeds from a post-translocation (POST) complex to a pre-translocation (PRE) complex, thus giving elongation factor G a second chance to translocate the tRNAs correctly. Binds to ribosomes in a GTP-dependent manner. The chain is Elongation factor 4 from Aromatoleum aromaticum (strain DSM 19018 / LMG 30748 / EbN1) (Azoarcus sp. (strain EbN1)).